A 548-amino-acid chain; its full sequence is Chaperonin GroEL (548 aa).

Residues 30 to 33, Lys-51, 87 to 91, Gly-415, 479 to 481, and Asp-495 contribute to the ATP site; these read TLGP, DGTTT, and NAA.

It belongs to the chaperonin (HSP60) family. In terms of assembly, forms a cylinder of 14 subunits composed of two heptameric rings stacked back-to-back. Interacts with the co-chaperonin GroES.

It is found in the cytoplasm. The catalysed reaction is ATP + H2O + a folded polypeptide = ADP + phosphate + an unfolded polypeptide.. Its function is as follows. Together with its co-chaperonin GroES, plays an essential role in assisting protein folding. The GroEL-GroES system forms a nano-cage that allows encapsulation of the non-native substrate proteins and provides a physical environment optimized to promote and accelerate protein folding. The chain is Chaperonin GroEL from Klebsiella aerogenes (strain ATCC 13048 / DSM 30053 / CCUG 1429 / JCM 1235 / KCTC 2190 / NBRC 13534 / NCIMB 10102 / NCTC 10006 / CDC 819-56) (Enterobacter aerogenes).